We begin with the raw amino-acid sequence, 336 residues long: tRNA N6-adenosine threonylcarbamoyltransferase (336 aa).

Fe cation contacts are provided by His111 and His115. Substrate-binding positions include 134 to 138 (LVSGG), Asp167, Gly180, and Asn270. Asp298 serves as a coordination point for Fe cation.

Belongs to the KAE1 / TsaD family. Fe(2+) is required as a cofactor.

Its subcellular location is the cytoplasm. The catalysed reaction is L-threonylcarbamoyladenylate + adenosine(37) in tRNA = N(6)-L-threonylcarbamoyladenosine(37) in tRNA + AMP + H(+). Functionally, required for the formation of a threonylcarbamoyl group on adenosine at position 37 (t(6)A37) in tRNAs that read codons beginning with adenine. Is involved in the transfer of the threonylcarbamoyl moiety of threonylcarbamoyl-AMP (TC-AMP) to the N6 group of A37, together with TsaE and TsaB. TsaD likely plays a direct catalytic role in this reaction. The chain is tRNA N6-adenosine threonylcarbamoyltransferase from Acinetobacter baumannii (strain SDF).